A 158-amino-acid polypeptide reads, in one-letter code: Transcription elongation factor GreA (158 aa).

A coiled-coil region spans residues 45 to 72 (AEYHAAREQQSFIEGRIKQLEGELSHAE).

The protein belongs to the GreA/GreB family.

Functionally, necessary for efficient RNA polymerase transcription elongation past template-encoded arresting sites. The arresting sites in DNA have the property of trapping a certain fraction of elongating RNA polymerases that pass through, resulting in locked ternary complexes. Cleavage of the nascent transcript by cleavage factors such as GreA or GreB allows the resumption of elongation from the new 3'terminus. GreA releases sequences of 2 to 3 nucleotides. In Xylella fastidiosa (strain 9a5c), this protein is Transcription elongation factor GreA.